A 157-amino-acid chain; its full sequence is S-ribosylhomocysteine lyase (157 aa).

3 residues coordinate Fe cation: histidine 54, histidine 58, and cysteine 126.

Belongs to the LuxS family. Homodimer. Requires Fe cation as cofactor.

It catalyses the reaction S-(5-deoxy-D-ribos-5-yl)-L-homocysteine = (S)-4,5-dihydroxypentane-2,3-dione + L-homocysteine. Its function is as follows. Involved in the synthesis of autoinducer 2 (AI-2) which is secreted by bacteria and is used to communicate both the cell density and the metabolic potential of the environment. The regulation of gene expression in response to changes in cell density is called quorum sensing. Catalyzes the transformation of S-ribosylhomocysteine (RHC) to homocysteine (HC) and 4,5-dihydroxy-2,3-pentadione (DPD). The protein is S-ribosylhomocysteine lyase of Bacillus velezensis (strain DSM 23117 / BGSC 10A6 / LMG 26770 / FZB42) (Bacillus amyloliquefaciens subsp. plantarum).